Reading from the N-terminus, the 97-residue chain is Large ribosomal subunit protein bL28 (97 aa).

This sequence belongs to the bacterial ribosomal protein bL28 family.

This Sphingopyxis alaskensis (strain DSM 13593 / LMG 18877 / RB2256) (Sphingomonas alaskensis) protein is Large ribosomal subunit protein bL28.